The chain runs to 378 residues: Probable endopolygalacturonase E (378 aa).

The signal sequence occupies residues Met1–Ala19. Residues Ser20–Lys38 constitute a propeptide that is removed on maturation. An intrachain disulfide couples Cys43 to Cys61. PbH1 repeat units lie at residues Gly103 to Gly125, Ser174 to Asp204, and Ser205 to Ser226. The Proton donor role is filled by Asp219. The cysteines at positions 221 and 237 are disulfide-linked. Residue His241 is part of the active site. PbH1 repeat units follow at residues Val256–Thr277, Val285–Gln307, and Thr317–Cys345. The N-linked (GlcNAc...) asparagine glycan is linked to Asn258. Intrachain disulfides connect Cys345–Cys350 and Cys369–Cys378.

The protein belongs to the glycosyl hydrolase 28 family.

The protein resides in the secreted. The catalysed reaction is (1,4-alpha-D-galacturonosyl)n+m + H2O = (1,4-alpha-D-galacturonosyl)n + (1,4-alpha-D-galacturonosyl)m.. Functionally, involved in maceration and soft-rotting of plant tissue. Hydrolyzes the 1,4-alpha glycosidic bonds of de-esterified pectate in the smooth region of the plant cell wall. This chain is Probable endopolygalacturonase E (pgaE), found in Aspergillus niger (strain ATCC MYA-4892 / CBS 513.88 / FGSC A1513).